The primary structure comprises 274 residues: Large ribosomal subunit protein uL2cz/uL2cy (274 aa).

2 disordered regions span residues 1-21 (MAIHLYKTSTPSTRNGAVDSQ) and 225-254 (PVDHPHGGGEGRAPIGRKKPVTPWGYPALG).

This sequence belongs to the universal ribosomal protein uL2 family. In terms of assembly, part of the 50S ribosomal subunit.

It localises to the plastid. Its subcellular location is the chloroplast. The sequence is that of Large ribosomal subunit protein uL2cz/uL2cy (rpl2-A) from Draba nemorosa (Woodland whitlowgrass).